A 431-amino-acid chain; its full sequence is Glucose-1-phosphate adenylyltransferase (431 aa).

Lys-39 contacts beta-D-fructose 1,6-bisphosphate. AMP contacts are provided by Arg-40, His-46, and Arg-52. Residue Tyr-114 participates in alpha-D-glucose 1-phosphate binding. Arg-130 lines the AMP pocket. Alpha-D-glucose 1-phosphate is bound by residues Gly-179, 194–195, and Ser-212; that span reads EK. Residue Arg-386 participates in AMP binding. Beta-D-fructose 1,6-bisphosphate is bound by residues 419–423 and 429–431; these read REMLR and QER.

The protein belongs to the bacterial/plant glucose-1-phosphate adenylyltransferase family. In terms of assembly, homotetramer.

The catalysed reaction is alpha-D-glucose 1-phosphate + ATP + H(+) = ADP-alpha-D-glucose + diphosphate. It participates in glycan biosynthesis; glycogen biosynthesis. With respect to regulation, allosterically activated by fructose-1,6-bisphosphate (F16BP) and inhibited by AMP. Involved in the biosynthesis of ADP-glucose, a building block required for the elongation reactions to produce glycogen. Catalyzes the reaction between ATP and alpha-D-glucose 1-phosphate (G1P) to produce pyrophosphate and ADP-Glc. The chain is Glucose-1-phosphate adenylyltransferase from Enterobacter sp. (strain 638).